The sequence spans 640 residues: Threonine--tRNA ligase (640 aa).

Residues 1–60 (MKITFPDGAVKEFEPGVSTADIAASISPGLKKKALAGKLNGELLDLVTPIHEDGAIEIVT) enclose the TGS domain. Residues 241-538 (DHRKLGKELD…LIEEYKGAFP (298 aa)) are catalytic. Zn(2+)-binding residues include cysteine 334, histidine 385, and histidine 515.

This sequence belongs to the class-II aminoacyl-tRNA synthetase family. Homodimer. Requires Zn(2+) as cofactor.

It is found in the cytoplasm. The catalysed reaction is tRNA(Thr) + L-threonine + ATP = L-threonyl-tRNA(Thr) + AMP + diphosphate + H(+). In terms of biological role, catalyzes the attachment of threonine to tRNA(Thr) in a two-step reaction: L-threonine is first activated by ATP to form Thr-AMP and then transferred to the acceptor end of tRNA(Thr). Also edits incorrectly charged L-seryl-tRNA(Thr). In Listeria monocytogenes serotype 4b (strain CLIP80459), this protein is Threonine--tRNA ligase.